A 509-amino-acid polypeptide reads, in one-letter code: UDP-N-acetylmuramyl-tripeptide synthetase (509 aa).

124-130 (GTNGKTS) is a binding site for ATP. UDP-N-acetyl-alpha-D-muramoyl-L-alanyl-D-glutamate contacts are provided by residues 164–165 (TT), serine 191, and arginine 199. Residue lysine 231 is modified to N6-carboxylysine.

The protein belongs to the MurCDEF family. MurE subfamily. Carboxylation is probably crucial for Mg(2+) binding and, consequently, for the gamma-phosphate positioning of ATP.

The protein localises to the cytoplasm. It functions in the pathway cell wall biogenesis; peptidoglycan biosynthesis. In terms of biological role, catalyzes the addition of an amino acid to the nucleotide precursor UDP-N-acetylmuramoyl-L-alanyl-D-glutamate (UMAG) in the biosynthesis of bacterial cell-wall peptidoglycan. This Tropheryma whipplei (strain Twist) (Whipple's bacillus) protein is UDP-N-acetylmuramyl-tripeptide synthetase.